Reading from the N-terminus, the 378-residue chain is mRNA cap guanine-N(7) methyltransferase (378 aa).

An mRNA cap 0 methyltransferase domain is found at 24-331 (SRIFFMRNMN…MYLVFGFRKK (308 aa)). 33-34 (NN) is a binding site for mRNA. 6 residues coordinate S-adenosyl-L-methionine: K37, A62, D84, D116, Q138, and Y143. Basic and acidic residues-rich tracts occupy residues 335–347 (EKNLESEAPEIKK) and 356–378 (DTDKTAEKNEERIEEKEENPSHC). The disordered stretch occupies residues 335–378 (EKNLESEAPEIKKVTPVPLNEDTDKTAEKNEERIEEKEENPSHC).

It belongs to the class I-like SAM-binding methyltransferase superfamily. mRNA cap 0 methyltransferase family.

The protein resides in the nucleus. The enzyme catalyses a 5'-end (5'-triphosphoguanosine)-ribonucleoside in mRNA + S-adenosyl-L-methionine = a 5'-end (N(7)-methyl 5'-triphosphoguanosine)-ribonucleoside in mRNA + S-adenosyl-L-homocysteine. Functionally, mRNA-capping methyltransferase that methylates the N7 position of the added guanosine to the 5'-cap structure of mRNAs. Binds RNA containing 5'-terminal GpppC. In Caenorhabditis briggsae, this protein is mRNA cap guanine-N(7) methyltransferase.